Reading from the N-terminus, the 576-residue chain is CTP synthase (576 aa).

A Glutamine amidotransferase type-1 domain is found at 305 to 559 (QIALVGKYTH…LGLVAAAANI (255 aa)). Catalysis depends on for GATase activity residues cysteine 404, histidine 535, and glutamate 537.

Belongs to the CTP synthase family.

The catalysed reaction is UTP + L-glutamine + ATP + H2O = CTP + L-glutamate + ADP + phosphate + 2 H(+). It participates in pyrimidine metabolism; CTP biosynthesis via de novo pathway; CTP from UDP: step 2/2. Functionally, catalyzes the ATP-dependent amination of UTP to CTP with either L-glutamine or ammonia as the source of nitrogen. This Eremothecium gossypii (strain ATCC 10895 / CBS 109.51 / FGSC 9923 / NRRL Y-1056) (Yeast) protein is CTP synthase (URA7).